We begin with the raw amino-acid sequence, 527 residues long: MATAWVATALRSAAAARRLRSPGGPGGSRRLSGSARRRGAKSASPGRRLSTARAHAEDAEGAKGRVQSPAVEEPSWTPLPTPLESPAPPAGRSLVQRDIQAFLNQCGASPGEARHWLTQFQTCYHSVDKPFAVMEVDEEVIRCPQAVSRLAFALAFLQRMDMKPLVVLGLPTPTAPSGCLSFWEAKAQLAQSCKVLVDELRHNAATAVPFFGGGSVLSAAEPAPHASYGGIVAVETDLLQWCLESNSIPILCPIGETAARRSVLLDSLEVTASLAKALQPTKIIFLNNSGGLRNNSQKILSNVNLPADLDLVTNAEWLSIKERQQIRLIVDVLSRLPHYSSAVITAASTLLTELFSNKGCGTLFKNAERMLRVRNLDSLDQGRLVNLVNASFGKKLREDYLESLRPRLHSIYVSEGYNAAAILTVEPVLGGTPYLDKFVVSSSRQGQGSGQMLWECLRRDLQTLFWRSRVTNPINPWYFKHSDGSFSNKQWIFFWFGLADIRDSYELVNHAKGLPDSFCKPASDPGS.

A mitochondrion-targeting transit peptide spans 1–18 (MATAWVATALRSAAAARR). Residues 14–91 (AAARRLRSPG…PLESPAPPAG (78 aa)) are disordered. The segment at 19 to 369 (LRSPGGPGGS…CGTLFKNAER (351 aa)) is amino-acid kinase domain (AAK). Residues 54-63 (AHAEDAEGAK) are compositionally biased toward basic and acidic residues. A compositionally biased stretch (pro residues) spans 77–89 (TPLPTPLESPAPP). The region spanning 368–519 (ERMLRVRNLD…HAKGLPDSFC (152 aa)) is the N-acetyltransferase domain. Residues Lys-394, Lys-437, and 467-472 (RSRVTN) each bind substrate.

The protein belongs to the acetyltransferase family. Homodimer. Homotetramer. Post-translationally, probably processed by mitochondrial processing peptidase (MPP). The long form has not yet been isolated. As to expression, highly expressed in the liver and small intestine. Weakly expressed in the kidney, spleen and testis.

Its subcellular location is the mitochondrion matrix. The catalysed reaction is L-glutamate + acetyl-CoA = N-acetyl-L-glutamate + CoA + H(+). It participates in amino-acid biosynthesis; L-arginine biosynthesis; N(2)-acetyl-L-ornithine from L-glutamate: step 1/4. Increased by L-arginine. Its function is as follows. Plays a role in the regulation of ureagenesis by producing the essential cofactor N-acetylglutamate (NAG), thus modulating carbamoylphosphate synthase I (CPS1) activity. The polypeptide is N-acetylglutamate synthase, mitochondrial (Nags) (Mus musculus (Mouse)).